The primary structure comprises 455 residues: P2X purinoceptor 5 (455 aa).

At 1 to 30 (MGQAAWKGFVLSLFDYKTAKFVVAKSKKVG) the chain is on the cytoplasmic side. Residues 31–50 (LLYRVLQLTILLYLLIWVFL) traverse the membrane as a helical segment. Residues 51-339 (IKKSYQDIDT…KFSIIPTVIN (289 aa)) are Extracellular-facing. 69 to 71 (KVK) provides a ligand contact to ATP. N-linked (GlcNAc...) asparagine glycosylation is present at asparagine 77. Intrachain disulfides connect cysteine 118–cysteine 169, cysteine 129–cysteine 152, and cysteine 135–cysteine 163. Asparagine 157 is a glycosylation site (N-linked (GlcNAc...) asparagine). Residue threonine 189 coordinates ATP. Asparagine 202 carries an N-linked (GlcNAc...) asparagine glycan. 2 cysteine pairs are disulfide-bonded: cysteine 220/cysteine 229 and cysteine 263/cysteine 272. ATP contacts are provided by residues 294-296 (NFR) and lysine 314. Residues 340–362 (IGSGLALMGAGAFFCDLVLIYLI) form a helical membrane-spanning segment. Residues 363–455 (RKSEFYRDKK…PSQILQTVKT (93 aa)) lie on the Cytoplasmic side of the membrane.

The protein belongs to the P2X receptor family. As to quaternary structure, functional P2XRs are organized as homomeric and heteromeric trimers. Homotrimer. Forms heterotrimer with P2RX1. As to expression, expressed in a number of tissues, with highest levels detected in heart and kidney.

The protein resides in the cell membrane. The catalysed reaction is Na(+)(in) = Na(+)(out). The enzyme catalyses Ca(2+)(in) = Ca(2+)(out). It carries out the reaction chloride(in) = chloride(out). Activated by ATP. Slowly desensitizing. Not activated by ATP agonist alpha/beta-methylene-ATP. Highly sensitive to the antagonists suramin and PPADS. Functionally, ATP-gated nonselective transmembrane cation channel permeable to potassium, sodium and calcium. Unlike other P2RX receptors, the P2X5 receptor is also permeable to chloride. Acts as an important regulator of inflammatory-related bone loss and osteoclast multinucleation. In Mus musculus (Mouse), this protein is P2X purinoceptor 5.